The sequence spans 183 residues: MKKKTTLSEEDQALFRQLMAGTRKIKQDTIVHRPQRKKVSEVPVKRLIQEQVDASHYFSDEFQPLLNADGPVKYVRPGVDHFEAKKLRRGDYSPELFLDLHGLTQLQAKQELGALIAACRREHVFCACVMHGHGKHILKQQTPLWLAQHPHVMAFHQAPKEYGGDAALLVLIEVEEWLPPELP.

Positions 98-173 constitute a Smr domain; sequence LDLHGLTQLQ…GDAALLVLIE (76 aa).

It belongs to the SmrB family. Associates with collided ribosomes, but not with correctly translating polysomes.

Functionally, acts as a ribosome collision sensor. Detects stalled/collided disomes (pairs of ribosomes where the leading ribosome is stalled and a second ribosome has collided with it) and endonucleolytically cleaves mRNA at the 5' boundary of the stalled ribosome. Stalled/collided disomes form a new interface (primarily via the 30S subunits) that binds SmrB. Cleaved mRNA becomes available for tmRNA ligation, leading to ribosomal subunit dissociation and rescue of stalled ribosomes. This chain is Ribosome rescue factor SmrB, found in Escherichia coli O157:H7.